The sequence spans 328 residues: tRNA U34 carboxymethyltransferase (328 aa).

Carboxy-S-adenosyl-L-methionine is bound by residues lysine 91, tryptophan 105, lysine 110, glycine 130, 152 to 154 (DPS), methionine 196, tyrosine 200, and arginine 315.

Belongs to the class I-like SAM-binding methyltransferase superfamily. CmoB family. As to quaternary structure, homotetramer.

It carries out the reaction carboxy-S-adenosyl-L-methionine + 5-hydroxyuridine(34) in tRNA = 5-carboxymethoxyuridine(34) in tRNA + S-adenosyl-L-homocysteine + H(+). In terms of biological role, catalyzes carboxymethyl transfer from carboxy-S-adenosyl-L-methionine (Cx-SAM) to 5-hydroxyuridine (ho5U) to form 5-carboxymethoxyuridine (cmo5U) at position 34 in tRNAs. The protein is tRNA U34 carboxymethyltransferase of Psychromonas ingrahamii (strain DSM 17664 / CCUG 51855 / 37).